A 602-amino-acid chain; its full sequence is Alpha-glucosides permease MPH3 (602 aa).

Residues 1 to 106 (MKNLSFLINR…AAAWSLLVST (106 aa)) lie on the Cytoplasmic side of the membrane. The helical transmembrane segment at 107–127 (TLIMEGYDTAILGAFYALPIF) threads the bilayer. The Extracellular portion of the chain corresponds to 128-142 (QRKFGSQNDKTGEWE). Residues 143–163 (ISASWQIGLTLCYMAGEIVGL) traverse the membrane as a helical segment. Over 164 to 178 (QLTGPSVDLVGNRYT) the chain is Cytoplasmic. The helical transmembrane segment at 179–199 (LIIALFFLAAFTFILYFCNSL) threads the bilayer. Residue Gly-200 is a topological domain, extracellular. The chain crosses the membrane as a helical span at residues 201-221 (MIAVGQALCGMPWGCFQCLTV). Residues 222-234 (SYASEICPLALRY) are Cytoplasmic-facing. A helical membrane pass occupies residues 235–255 (YLTTYSNLCWLFGQLFAAGIM). Residues 256-270 (KNSQKKYADSELGYK) lie on the Extracellular side of the membrane. A helical membrane pass occupies residues 271 to 291 (LPFALQWILPVPLALGIFFAP). The Cytoplasmic portion of the chain corresponds to 292–363 (ESPWWLVKKG…EDKINRRRTR (72 aa)). Residues 364–384 (ITCLCWAGQATCGSILIGYST) traverse the membrane as a helical segment. The Extracellular portion of the chain corresponds to 385 to 397 (YFYEKAGVSTEMS). Residues 398–418 (FTFSIIQYCLGICATFLSWWA) form a helical membrane-spanning segment. Residues 419–426 (SKYFGRYD) are Cytoplasmic-facing. The helical transmembrane segment at 427-447 (LYAFGLAFQTIVFFIIGGLGC) threads the bilayer. The Extracellular segment spans residues 448–459 (SSTHGSKMGSGS). A helical transmembrane segment spans residues 460–480 (LLMAVAFFYNLGIAPVVFCLV). Over 481 to 492 (SEMPSSRLRTKT) the chain is Cytoplasmic. Residues 493-513 (IILARNTYNVVSIICSVLILY) traverse the membrane as a helical segment. Topologically, residues 514-525 (QLNSKKWNWGAK) are extracellular. A helical transmembrane segment spans residues 526–546 (SGFFWGVLCFCTLIWAVVDLP). The Cytoplasmic portion of the chain corresponds to 547 to 602 (ETAGKTFVEINELFKLGVSARKFKSTKVDPFVVKNPPKDVSHNDPKGDIEASIAEE). Residues 580-602 (KNPPKDVSHNDPKGDIEASIAEE) are disordered. The segment covering 582–595 (PPKDVSHNDPKGDI) has biased composition (basic and acidic residues).

This sequence belongs to the major facilitator superfamily. Sugar transporter (TC 2.A.1.1) family.

Its subcellular location is the cell membrane. In terms of biological role, high-affinity uptake of maltose and maltotriose. Also transports alpha-methylglucoside, glucose and turanose but not melezitose or trehalose. The sequence is that of Alpha-glucosides permease MPH3 (MPH3) from Saccharomyces cerevisiae (strain AWRI1631) (Baker's yeast).